We begin with the raw amino-acid sequence, 230 residues long: Large ribosomal subunit protein uL4 (230 aa).

The segment at 59 to 113 (RQGTHATKTRGEVSGGGKKPYRQKGTGRARQGSTRAPQFTGGGTVHGPQPRDYSQ) is disordered.

Belongs to the universal ribosomal protein uL4 family. In terms of assembly, part of the 50S ribosomal subunit.

One of the primary rRNA binding proteins, this protein initially binds near the 5'-end of the 23S rRNA. It is important during the early stages of 50S assembly. It makes multiple contacts with different domains of the 23S rRNA in the assembled 50S subunit and ribosome. In terms of biological role, forms part of the polypeptide exit tunnel. The chain is Large ribosomal subunit protein uL4 from Nocardia farcinica (strain IFM 10152).